The chain runs to 976 residues: Peptidylglycine alpha-amidating monooxygenase (976 aa).

Residues 1–25 (MAGRARSGLLLLLLGLLALQSSCLA) form the signal peptide. The peptidylglycine alpha-hydroxylating monooxygenase stretch occupies residues 1–497 (MAGRARSGLL…EGPWEPEPSG (497 aa)). The propeptide occupies 26–35 (FRSPLSVFKR). At 36–866 (FKETTRSFSN…QKLSTEPGSG (831 aa)) the chain is on the intragranular side. 5 disulfides stabilise this stretch: Cys-47–Cys-186, Cys-81–Cys-126, Cys-114–Cys-131, Cys-227–Cys-334, and Cys-293–Cys-315. Residues His-107 and His-108 each coordinate Cu(2+). Residues His-172, His-242, His-244, and Met-314 each contribute to the Cu(2+) site. The peptidyl-alpha-hydroxyglycine alpha-amidating lyase stretch occupies residues 498–820 (DFHVEEELDW…LTEKMEHRSV (323 aa)). NHL repeat units lie at residues 501–544 (VEEE…NSFD), 570–611 (AEIL…LDPH), 620–665 (LGRS…FSPS), and 673–717 (GEES…FKTD). Residue Val-520 participates in Ca(2+) binding. Arg-533 contacts a protein. His-585 lines the Zn(2+) pocket. A Ca(2+)-binding site is contributed by Leu-587. A disulfide bridge connects residues Cys-634 and Cys-655. Tyr-654 contacts a protein. His-690 contacts Zn(2+). Cys-702 and Cys-713 are joined by a disulfide. Arg-706 contributes to the a protein binding site. An N-linked (GlcNAc...) asparagine glycan is attached at Asn-765. Residues 769 to 812 (GEIIDVFKPVRKHFDMPHDIVASEDGTVYIGDAHTNTVWKFTLT) form an NHL 5 repeat. Residue Val-774 is modified to Sulfotyrosine. Residue His-786 coordinates Zn(2+). Residue Asp-787 participates in Ca(2+) binding. Glu-792 is modified (sulfotyrosine). A helical transmembrane segment spans residues 867 to 890 (VSVVLITTLLVIPVLVLLAIVMFI). The Cytoplasmic portion of the chain corresponds to 891–976 (RWKKSRAFGD…APLPKPAPSS (86 aa)). 3 positions are modified to phosphoserine: Ser-921, Ser-932, and Ser-945. The segment at 928–945 (NFFASRKGYSRKGFDRVS) is interaction with RASSF9. The disordered stretch occupies residues 940–976 (GFDRVSTEGSDQEKDEDDGTESEEEYSAPLPKPAPSS). Phosphothreonine is present on Thr-946. Position 949 is a phosphoserine (Ser-949). Residues 952 to 965 (EKDEDDGTESEEEY) are compositionally biased toward acidic residues. The residue at position 959 (Thr-959) is a Phosphothreonine. Ser-961 bears the Phosphoserine mark.

In the C-terminal section; belongs to the peptidyl-alpha-hydroxyglycine alpha-amidating lyase family. It in the N-terminal section; belongs to the copper type II ascorbate-dependent monooxygenase family. In terms of assembly, monomer. Interacts with RASSF9. Requires Zn(2+) as cofactor. Cu(2+) is required as a cofactor.

The protein localises to the cytoplasmic vesicle. It localises to the secretory vesicle membrane. It is found in the membrane. The protein resides in the secreted. The catalysed reaction is a [peptide]-C-terminal glycine + 2 L-ascorbate + O2 = a [peptide]-C-terminal (2S)-2-hydroxyglycine + 2 monodehydro-L-ascorbate radical + H2O. It catalyses the reaction a [peptide]-C-terminal (2S)-2-hydroxyglycine = a [peptide]-C-terminal amide + glyoxylate. It carries out the reaction N-dodecanoylglycine + 2 L-ascorbate + O2 = N-dodecanoyl-(2S)-hydroxyglycine + 2 monodehydro-L-ascorbate radical + H2O. The enzyme catalyses N-dodecanoyl-(2S)-hydroxyglycine = dodecanamide + glyoxylate. The catalysed reaction is N-(9Z,12Z,15Z)-octadecatrienoylglycine + 2 L-ascorbate + O2 = N-(9Z,12Z,15Z)-octadecatrienoyl-(2S)-hydroxyglycine + 2 monodehydro-L-ascorbate radical + H2O. It catalyses the reaction N-(9Z,12Z,15Z)-octadecatrienoyl-(2S)-hydroxyglycine = (9Z,12Z,15Z)-octadecatrienamide + glyoxylate. It carries out the reaction N-(9Z-octadecenoyl)glycine + 2 L-ascorbate + O2 = N-(9Z-octadecenoyl)-(2S)-hydroxyglycine + 2 monodehydro-L-ascorbate radical + H2O. The enzyme catalyses N-(9Z-octadecenoyl)-(2S)-hydroxyglycine = (9Z)-octadecenamide + glyoxylate. The catalysed reaction is N-tetradecanoylglycine + 2 L-ascorbate + O2 = N-tetradecanoyl-(2S)-hydroxyglycine + 2 monodehydro-L-ascorbate radical + H2O. It catalyses the reaction N-tetradecanoyl-(2S)-hydroxyglycine = tetradecamide + glyoxylate. It carries out the reaction N-decanoylglycine + 2 L-ascorbate + O2 = N-decanoyl-(2S)-hydroxyglycine + 2 monodehydro-L-ascorbate radical + H2O. The enzyme catalyses N-decanoyl-(2S)-hydroxyglycine = decanamide + glyoxylate. The catalysed reaction is N-octanoylglycine + 2 L-ascorbate + O2 = N-octanoyl-(2S)-hydroxyglycine + 2 monodehydro-L-ascorbate radical + H2O. It catalyses the reaction N-octanoyl-(2S)-hydroxyglycine = octanamide + glyoxylate. Its activity is regulated as follows. PAM activity is inhibited by EDTA, phenylglyoxal and diethyl pyrocarbonate. PAL activity is stimulated by cadmium and inhibited by mercury. Functionally, bifunctional enzyme that catalyzes amidation of the C-terminus of proteins. Alpha-amidation is present at the C-terminus of many endocrine hormones and neuropeptides and is required for their activity. C-terminal amidation also takes place in response to protein fragmentation triggered by oxidative stress, promoting degradation of amidated protein fragments by the proteasome. Alpha-amidation involves two sequential reactions, both of which are catalyzed by separate catalytic domains of the enzyme. The first step, catalyzed by peptidyl alpha-hydroxylating monooxygenase (PHM) domain, is the copper-, ascorbate-, and O2- dependent stereospecific hydroxylation (with S stereochemistry) at the alpha-carbon (C-alpha) of the C-terminal glycine of the peptidylglycine substrate. The second step, catalyzed by the peptidylglycine amidoglycolate lyase (PAL) domain, is the zinc-dependent cleavage of the N-C-alpha bond, producing the alpha-amidated peptide and glyoxylate. Similarly, catalyzes the two-step conversion of an N-fatty acylglycine to a primary fatty acid amide and glyoxylate. In Rattus norvegicus (Rat), this protein is Peptidylglycine alpha-amidating monooxygenase.